Here is a 658-residue protein sequence, read N- to C-terminus: Staphylocoagulase (658 aa).

The N-terminal stretch at 1 to 26 (MKKQIISLGALAVASSLFTWDNKADA) is a signal peptide. 4 stretches are compositionally biased toward polar residues: residues 391–406 (MEQN…TQPT), 428–440 (GTES…QGES), 499–514 (PSET…QDGT), and 521–531 (PTQNKPSETNA). A disordered region spans residues 391–531 (MEQNRPSLSD…TQNKPSETNA (141 aa)). Repeat copies occupy residues 492-518 (ARPR…VSYG), 519-545 (ARPT…VSYG), 546-572 (ARPT…VSYG), 573-599 (ARPT…VSYG), 600-626 (ARPT…VSYG), and 627-653 (ARPT…ATYG). Residues 492 to 653 (ARPRFNKPSE…THADGTATYG (162 aa)) form a 6 X 27 AA tandem repeats of A-R-P-[RT]-[FQY]-[NK]-K-P-S-[EK]-T-N-A-Y-N-V-T-T-[NH]-[QA]-[DN]-G-[TQ]-[VA]-[ST]-Y-G region. Residues 619 to 658 (ANGQVSYGARPTQKKPSETNAYNVTTHADGTATYGPRVTK) form a disordered region. Polar residues predominate over residues 636–646 (ETNAYNVTTHA).

The protein belongs to the staphylocoagulase family.

Staphylocoagulase is an extracellular protein which specifically forms a complex with human prothrombin. This complex named staphylothrombin can clot fibrinogen without any proteolytic cleavage of prothrombin. The sequence is that of Staphylocoagulase from Staphylococcus aureus.